Reading from the N-terminus, the 244-residue chain is MQALQASRLTGQARPCSSSVVPRCSSLHVSRPISSGVSSSQELSSRSSAPATKSWRSSGRVITRATATAAPSELDDVGVSAAAESIIQYAINFARASETYEVHSWMVLMGILKYETCTAAKILKSLGLEDLYGAWNEVLWALNVCDGLQPRSFVTDIKFADRAFKVITAASDFAVWHGKDKMYSEDVLMALAAGGVLEDLFPDLNLSFERVRKAVEKESGRRYQLPDETEEAGPLKSEDDVSFL.

The N-terminal 64 residues, 1–64, are a transit peptide targeting the chloroplast; the sequence is MQALQASRLT…WRSSGRVITR (64 aa). Residues 30–48 are compositionally biased toward low complexity; it reads SRPISSGVSSSQELSSRSS. Disordered stretches follow at residues 30–55 and 220–244; these read SRPI…TKSW and GRRY…VSFL.

This sequence belongs to the ClpA/ClpB family.

It localises to the plastid. The protein resides in the chloroplast. Functionally, accessory protein regulating the assembly of the plastid Clp protease system. This is ATP-dependent Clp protease ATP-binding subunit CLPT4, chloroplastic from Chlamydomonas reinhardtii (Chlamydomonas smithii).